We begin with the raw amino-acid sequence, 1106 residues long: Protein translocase subunit SecA (1106 aa).

Residues Gln-175, 193-197 (GEGKT), and Asp-694 each bind ATP. Positions 1021-1106 (QEAPADEQQP…KYKNCHGQNA (86 aa)) are disordered. Positions 1042-1056 (QRQDMSKYREQKQDL) are enriched in basic and acidic residues. Positions 1057 to 1067 (SDPNQQAAASQ) are enriched in polar residues. Residues 1068-1085 (DTREQQKREPIRAEKTVG) are compositionally biased toward basic and acidic residues. Residues Cys-1090, Cys-1092, Cys-1101, and His-1102 each coordinate Zn(2+).

The protein belongs to the SecA family. Monomer and homodimer. Part of the essential Sec protein translocation apparatus which comprises SecA, SecYEG and auxiliary proteins SecDF. Other proteins may also be involved. Zn(2+) serves as cofactor.

It is found in the cell inner membrane. The protein localises to the cytoplasm. The catalysed reaction is ATP + H2O + cellular proteinSide 1 = ADP + phosphate + cellular proteinSide 2.. Its function is as follows. Part of the Sec protein translocase complex. Interacts with the SecYEG preprotein conducting channel. Has a central role in coupling the hydrolysis of ATP to the transfer of proteins into and across the cell membrane, serving as an ATP-driven molecular motor driving the stepwise translocation of polypeptide chains across the membrane. The chain is Protein translocase subunit SecA from Bacteroides thetaiotaomicron (strain ATCC 29148 / DSM 2079 / JCM 5827 / CCUG 10774 / NCTC 10582 / VPI-5482 / E50).